Consider the following 75-residue polypeptide: MSPKVIAICLVALLLPISISHGGRIGPIEPSKASSKVVERGNYDGRVEGCEEDDCLVERLLVAHLDYIYTQGKHN.

Positions 1-22 (MSPKVIAICLVALLLPISISHG) are cleaved as a signal peptide. Residues 23–66 (GRIGPIEPSKASSKVVERGNYDGRVEGCEEDDCLVERLLVAHLD) constitute a propeptide that is removed on maturation. A sulfotyrosine mark is found at tyrosine 67 and tyrosine 69. The propeptide occupies 72-75 (GKHN).

It belongs to the phytosulfokine family. Post-translationally, sulfation is important for activity and for the binding to a putative membrane receptor. PSK-alpha is produced by endopeptidase digestion. PSK-beta is produced from PSK-alpha by exopeptidase digestion.

It is found in the secreted. Functionally, promotes plant cell differentiation, organogenesis and somatic embryogenesis as well as cell proliferation. The sequence is that of Phytosulfokines 3 (PSK3) from Oryza sativa subsp. japonica (Rice).